The chain runs to 119 residues: Autophagy-related protein 8C-like (119 aa).

A lipid anchor (Phosphatidylethanolamine amidated glycine) is attached at Gly117. Positions 118–119 are cleaved as a propeptide — removed in mature form; sequence SF.

It belongs to the ATG8 family. In terms of assembly, interacts with ATG4. Interacts with the Phytophtora infestans effector PexRD54. Interacts with JOKA2. Post-translationally, the C-terminal 2 residues are removed by ATG4 to expose Gly-117 at the C-terminus. The C-terminal Gly is then amidated with phosphatidylethanolamine by an activating system similar to that for ubiquitin. The phosphatidylethanolamine amidated glycine is required for autophagosome formation.

The protein resides in the cytoplasmic vesicle. Its subcellular location is the autophagosome membrane. The protein localises to the vacuole membrane. It localises to the cytoplasm. It is found in the cytoskeleton. Ubiquitin-like modifier involved in autophagosomes formation. May mediate the delivery of the autophagosomes to the vacuole via the microtubule cytoskeleton. ATG8CL-mediated selective autophagy contributes to defense against the fungal pathogen Phytophtora infestans. The sequence is that of Autophagy-related protein 8C-like from Solanum tuberosum (Potato).